Consider the following 191-residue polypeptide: Peptidyl-tRNA hydrolase (191 aa).

A tRNA-binding site is contributed by Tyr17. Residue His22 is the Proton acceptor of the active site. The tRNA site is built by Tyr68, Asn70, and Asn116.

The protein belongs to the PTH family. In terms of assembly, monomer.

The protein resides in the cytoplasm. The catalysed reaction is an N-acyl-L-alpha-aminoacyl-tRNA + H2O = an N-acyl-L-amino acid + a tRNA + H(+). Its function is as follows. Hydrolyzes ribosome-free peptidyl-tRNAs (with 1 or more amino acids incorporated), which drop off the ribosome during protein synthesis, or as a result of ribosome stalling. Functionally, catalyzes the release of premature peptidyl moieties from peptidyl-tRNA molecules trapped in stalled 50S ribosomal subunits, and thus maintains levels of free tRNAs and 50S ribosomes. This chain is Peptidyl-tRNA hydrolase, found in Mycobacterium ulcerans (strain Agy99).